The primary structure comprises 2303 residues: Genome polyprotein (2303 aa).

A zinc finger lies at 3 to 14 (CKHGYPDVCPIC). The interval 30–46 (DGEWYPTDLLCVDLDDD) is acidic. The interval 60–73 (MDWTDVPLIRDIVM) is theilo. The tract at residues 74-93 (EPQGNSSSSDKSNSQSSGNE) is disordered. Gly77 carries the N-myristoyl glycine; by host lipid modification. Low complexity predominate over residues 78 to 92 (NSSSSDKSNSQSSGN). The cysteines at positions 501 and 503 are disulfide-linked. Residues 1041–1047 (YYRQRLI) are host EIF4E binding. The SF3 helicase domain maps to 1283–1448 (IPLASLCEKF…CKTPAGMLDV (166 aa)). 1312–1319 (GAAGQGKS) contacts ATP. Position 1608 is an O-(5'-phospho-RNA)-tyrosine (Tyr1608). One can recognise a Peptidase C3 domain in the interval 1636-1829 (NPVMDFELFC…AATIITKELI (194 aa)). Residues His1680, Asp1714, and Cys1793 each act as for protease 3C activity in the active site. In terms of domain architecture, RdRp catalytic spans 2071-2189 (NYVYDVDYSN…GTNYQIDFNL (119 aa)). Residues Asp2077 and Asp2175 each act as for RdRp activity in the active site.

The protein belongs to the picornaviruses polyprotein family. As to quaternary structure, interacts with host EIF4E. Interacts with the leader protein. In terms of assembly, interacts with host RAN; the complex L-RAN recruits cellular kinases responsible for the L-induced nucleocytoplasmic trafficking inhibition. The complex L-RAN can further bind to the host exportins XPO1/CRM1 and CSE1L/CAS. Interacts with the protein 2A. Interacts with host RNASEL; this interaction prevents RNASEL activation by its substrate 2'-5' oligoadenylates. In terms of processing, phosphorylated. Specific enzymatic cleavages by the viral protease in vivo yield a variety of precursors and mature proteins. The polyprotein seems to be cotranslationally cleaved at the 2A/2B junction by a ribosomal skip from one codon to the next without formation of a peptide bond. This process would release the P1-2A peptide from the translational complex. Post-translationally, during virion maturation, immature virions are rendered infectious following cleavage of VP0 into VP4 and VP2. This maturation seems to be an autocatalytic event triggered by the presence of RNA in the capsid and is followed by a conformational change of the particle. In terms of processing, uridylylated by the polymerase and is covalently linked to the 5'-end of genomic RNA. This uridylylated form acts as a nucleotide-peptide primer for the polymerase. Myristoylation is required during RNA encapsidation and formation of the mature virus particle.

It localises to the virion. The protein resides in the host cytoplasm. The protein localises to the host nucleus. Its subcellular location is the host nucleolus. It is found in the host cytoplasmic vesicle membrane. The catalysed reaction is RNA(n) + a ribonucleoside 5'-triphosphate = RNA(n+1) + diphosphate. The enzyme catalyses ATP + H2O = ADP + phosphate + H(+). It carries out the reaction Selective cleavage of Gln-|-Gly bond in the poliovirus polyprotein. In other picornavirus reactions Glu may be substituted for Gln, and Ser or Thr for Gly.. In terms of biological role, forms a complex with host RAN and probably binds to exportins carrying activated MAPK in order to mediate the hyperphosphorylation of host Phe/Gly containing nuclear pore proteins (Nups) resulting in cessation of active nucleocytoplasmic transport. Proteins with NLS signals fail to import, cellular mRNAs fail to export, and some proteins small enough for diffusion are not retained anymore (efflux). The resulting inhibition of cellular protein synthesis serves to ensure maximal viral gene expression and to evade host immune response. The leader protein also inhibits host interferon regulatory factor 3 (IRF3) dimerization, thereby blocking the transcriptional activation of IFN genes. Binds to host RNase L thereby preventing its activation by 2'-5' oligoadenylates in order to counteract the antiviral interferon-inducible OAS/RNase L pathway. Inhibits the integrated stress response (ISR) in the infected cell. Inhibits the host EIF2AK2/PKR by rendering this kinase unable to detect double-stranded RNA. Also impairs host stress granule formation probably by acting on a step downstream of EIF2AK2/PKR activation. Functionally, forms an icosahedral capsid of pseudo T=3 symmetry with capsid proteins VP2 and VP3. Together they form an icosahedral capsid composed of 60 copies of each VP1, VP2, and VP3, with a diameter of approximately 300 Angstroms. VP4 lies on the inner surface of the protein shell formed by VP1, VP2 and VP3. All the three latter proteins contain a beta-sheet structure called beta-barrel jelly roll. VP1 is situated at the 12 fivefold axes, whereas VP2 and VP3 are located at the quasi-sixfold axes. Lies on the inner surface of the capsid shell. After binding to the host receptor, the capsid undergoes conformational changes. Capsid protein VP4 is released, capsid protein VP1 N-terminus is externalized, and together, they shape a pore in the host membrane through which the viral genome is translocated into the host cell cytoplasm. After genome has been released, the channel shrinks. Its function is as follows. VP0 precursor is a component of immature procapsids. In terms of biological role, involved in host translation shutoff by inhibiting cap-dependent mRNA translation. Nuclear localization is required for this function. The resulting inhibition of cellular protein synthesis serves to ensure maximal viral gene expression and to evade host immune response. Inhibits the phosphorylation of the leader protein. Functionally, affects membrane integrity and causes an increase in membrane permeability. Associates with and induces structural rearrangements of intracellular membranes. It displays RNA-binding, nucleotide binding and NTPase activities. Its function is as follows. Serves as membrane anchor via its hydrophobic domain. In terms of biological role, forms a primer, VPg-pU, which is utilized by the polymerase for the initiation of RNA chains. Functionally, cysteine protease that generates mature viral proteins from the precursor polyprotein. In addition to its proteolytic activity, it binds to viral RNA, and thus influences viral genome replication. RNA and substrate cooperatively bind to the protease. Cleaves host PABP1, this cleavage is important for viral replication. Replicates the genomic and antigenomic RNAs by recognizing replications specific signals. Performs VPg uridylylation. This chain is Genome polyprotein, found in Mus musculus (Mouse).